Here is a 479-residue protein sequence, read N- to C-terminus: Sodium-coupled neutral amino acid transporter 5 (479 aa).

Residues 1-61 (MAISCAVGME…LDFEGKTSFG (61 aa)) lie on the Cytoplasmic side of the membrane. A helical transmembrane segment spans residues 62-84 (MSVFNLSNAIMGSGILGLAYAMA). At 85-97 (HTGVIFFLALLLC) the chain is on the extracellular side. Residues 98-118 (IALLSSYSIHLLLTCASVVGI) form a helical membrane-spanning segment. Residues 119–135 (RAYEQLGQRAFGPAGKV) lie on the Cytoplasmic side of the membrane. A helical transmembrane segment spans residues 136–156 (VVAIIICLHNVGAMSSYLFII). Residues 157–176 (KSELPLVIGTFLHMDPEGDW) lie on the Extracellular side of the membrane. Residues 177–197 (FLKGNLLIILVSLLIILPLAL) form a helical membrane-spanning segment. The Cytoplasmic segment spans residues 198 to 202 (MKHLG). A helical membrane pass occupies residues 203–223 (YLGYTSSLSLTCMLFFLISVI). Over 224–264 (YKKFQIGCDVSHNDTVVEAEQAPLQAFNSSCEAELFTVDSQ) the chain is Extracellular. Cys-231 and Cys-254 are oxidised to a cystine. N-linked (GlcNAc...) asparagine glycosylation occurs at Asn-236. The helical transmembrane segment at 265 to 285 (MSYTVPIMAFAFVCHPEVLPI) threads the bilayer. At 286 to 302 (YTELCRPTQRRMQAVAN) the chain is on the cytoplasmic side. The helical transmembrane segment at 303–323 (MSIGAMFIMYGLTATFGYLTF) threads the bilayer. Over 324 to 341 (YSTVKAEMLEMYTQEDML) the chain is Extracellular. A helical membrane pass occupies residues 342–362 (ILCVRLAVLLAVTLTVPVVLF). The Cytoplasmic portion of the chain corresponds to 363–383 (PIRRALQQLLFPSKAFSWLRH). A helical transmembrane segment spans residues 384–404 (VAIALILLILVNILVICVPTI). Residues 405–406 (RD) are Extracellular-facing. Residues 407–427 (IFGFIGSTSAPSLIFILPSVF) traverse the membrane as a helical segment. Residues 428–446 (YLRIVPTEVEPLFSWPKIQ) are Cytoplasmic-facing. The chain crosses the membrane as a helical span at residues 447 to 467 (ALCFGVLGVLFMAISLGFMFA). The Extracellular segment spans residues 468–479 (NWATGQSRMSGH).

Belongs to the amino acid/polyamine transporter 2 family. In terms of tissue distribution, expressed in the ganglion cell layer and the nerve fiber layer (at protein level). Also expreseed in the cells of the inner nuclear layer and in the inner plexiform layer (at protein level). Expressed in Mueller and ganglion retinal cell.

It is found in the cell membrane. It catalyses the reaction L-glutamine(out) + Na(+)(out) + H(+)(in) = L-glutamine(in) + Na(+)(in) + H(+)(out). It carries out the reaction L-serine(out) + Na(+)(out) + H(+)(in) = L-serine(in) + Na(+)(in) + H(+)(out). The enzyme catalyses L-alanine(out) + Na(+)(out) + H(+)(in) = L-alanine(in) + Na(+)(in) + H(+)(out). The catalysed reaction is glycine(out) + Na(+)(out) + H(+)(in) = glycine(in) + Na(+)(in) + H(+)(out). It catalyses the reaction L-asparagine(out) + Na(+)(out) + H(+)(in) = L-asparagine(in) + Na(+)(in) + H(+)(out). It carries out the reaction L-histidine(out) + Na(+)(out) + H(+)(in) = L-histidine(in) + Na(+)(in) + H(+)(out). The enzyme catalyses L-cysteine(out) + Na(+)(out) + H(+)(in) = L-cysteine(in) + Na(+)(in) + H(+)(out). With respect to regulation, not inhibited by lithium. Partial allosteric regulation on ions sodium binding. Functionally, symporter that cotransports neutral amino acids and sodium ions, coupled to an H(+) antiporter activity. Releases L-glutamine and glycine from astroglial cells and may participate in the glutamate/GABA-L-glutamine cycle and the NMDA receptors activation. In addition, contributes significantly to L-glutamine uptake in retina, namely in ganglion and Mueller cells therefore, participates in the retinal glutamate-glutamine cycle. The transport activity is pH sensitive, Li(+) tolerant, bidirectional and associated with large uncoupled fluxes of protons. Moreover functions in both direction and is associated with large uncoupled fluxes of protons. The transport is electroneutral coupled to the cotransport of 1 Na(+) and the antiport of 1 H(+). May have a particular importance for modulation of net hepatic glutamine flux. The chain is Sodium-coupled neutral amino acid transporter 5 from Mus musculus (Mouse).